A 184-amino-acid polypeptide reads, in one-letter code: ATP synthase subunit b, chloroplastic (184 aa).

The helical transmembrane segment at 27-49 (LATNPINLSVVFGVLIFFGKGVL) threads the bilayer.

The protein belongs to the ATPase B chain family. F-type ATPases have 2 components, F(1) - the catalytic core - and F(0) - the membrane proton channel. F(1) has five subunits: alpha(3), beta(3), gamma(1), delta(1), epsilon(1). F(0) has four main subunits: a(1), b(1), b'(1) and c(10-14). The alpha and beta chains form an alternating ring which encloses part of the gamma chain. F(1) is attached to F(0) by a central stalk formed by the gamma and epsilon chains, while a peripheral stalk is formed by the delta, b and b' chains.

It is found in the plastid. The protein resides in the chloroplast thylakoid membrane. Functionally, f(1)F(0) ATP synthase produces ATP from ADP in the presence of a proton or sodium gradient. F-type ATPases consist of two structural domains, F(1) containing the extramembraneous catalytic core and F(0) containing the membrane proton channel, linked together by a central stalk and a peripheral stalk. During catalysis, ATP synthesis in the catalytic domain of F(1) is coupled via a rotary mechanism of the central stalk subunits to proton translocation. Its function is as follows. Component of the F(0) channel, it forms part of the peripheral stalk, linking F(1) to F(0). This Crucihimalaya wallichii (Rock-cress) protein is ATP synthase subunit b, chloroplastic.